The chain runs to 301 residues: Formamidopyrimidine-DNA glycosylase (301 aa).

P2 functions as the Schiff-base intermediate with DNA in the catalytic mechanism. Residue E3 is the Proton donor of the active site. K58 serves as the catalytic Proton donor; for beta-elimination activity. Residues H109, R131, and K174 each coordinate DNA. The segment at 265 to 301 adopts an FPG-type zinc-finger fold; that stretch reads SVYDREGQACRTPGCGGTVARIVQAGRSTFYCATCQK. R291 functions as the Proton donor; for delta-elimination activity in the catalytic mechanism.

This sequence belongs to the FPG family. As to quaternary structure, monomer. It depends on Zn(2+) as a cofactor.

It catalyses the reaction Hydrolysis of DNA containing ring-opened 7-methylguanine residues, releasing 2,6-diamino-4-hydroxy-5-(N-methyl)formamidopyrimidine.. It carries out the reaction 2'-deoxyribonucleotide-(2'-deoxyribose 5'-phosphate)-2'-deoxyribonucleotide-DNA = a 3'-end 2'-deoxyribonucleotide-(2,3-dehydro-2,3-deoxyribose 5'-phosphate)-DNA + a 5'-end 5'-phospho-2'-deoxyribonucleoside-DNA + H(+). In terms of biological role, involved in base excision repair of DNA damaged by oxidation or by mutagenic agents. Acts as a DNA glycosylase that recognizes and removes damaged bases. Has a preference for oxidized purines, such as 7,8-dihydro-8-oxoguanine (8-oxoG). Has AP (apurinic/apyrimidinic) lyase activity and introduces nicks in the DNA strand. Cleaves the DNA backbone by beta-delta elimination to generate a single-strand break at the site of the removed base with both 3'- and 5'-phosphates. The polypeptide is Formamidopyrimidine-DNA glycosylase (Rhizobium leguminosarum bv. trifolii (strain WSM2304)).